We begin with the raw amino-acid sequence, 640 residues long: RAP domain-containing protein, chloroplastic (640 aa).

The transit peptide at 1–32 (MEAALLRPPPLAARGGVSIAIAFSVSRLPSAA) directs the protein to the chloroplast. The disordered stretch occupies residues 111-158 (SLQRMVASPKKKNKKKKSKKTNLKQKKAAEPKPPRDTDDDEDDEEEAD). The span at 119 to 136 (PKKKNKKKKSKKTNLKQK) shows a compositional bias: basic residues. Positions 137 to 146 (KAAEPKPPRD) are enriched in basic and acidic residues. Over residues 147-158 (TDDDEDDEEEAD) the composition is skewed to acidic residues. Residues 575–633 (LAFEIDGPSHFSRNLGTPLGHTAFKRRYIAAAGWNLVSLSHQEWENLEGEFEQLEYLRR) form the RAP domain.

As to expression, expressed in roots, leaf sheaths, veins of leaf blade, mature leaves, endodermis of culm, panicles and anthers.

It localises to the plastid. Its subcellular location is the chloroplast. In terms of biological role, probable RNA-binding protein that plays an essential role in chloroplast development. Regulates the ribosomal proteins homeostasis and ribosomal RNA development in chloroplasts. Involved the regulation of 16S rRNA and required for the expression of chloroplast-associated photosynthetic genes. The chain is RAP domain-containing protein, chloroplastic from Oryza sativa subsp. japonica (Rice).